A 196-amino-acid chain; its full sequence is SPRY domain-containing protein 7 (196 aa).

The region spanning 1-184 (MAASVFCCLR…FSEFYHTPPP (184 aa)) is the B30.2/SPRY domain.

This is SPRY domain-containing protein 7 (SPRYD7) from Gallus gallus (Chicken).